The chain runs to 445 residues: Polyadenylate-binding protein RBP47A (445 aa).

Over residues 1-12 (MQTPNNNGSTDS) the composition is skewed to polar residues. Disordered regions lie at residues 1 to 45 (MQTP…WQQQ) and 93 to 117 (AAYQQQQQQHHQSQQQPRGGSGGDD). A compositionally biased stretch (pro residues) spans 22–35 (TPPPPLQQSTPPPQ). Low complexity-rich tracts occupy residues 36 to 45 (QQQQQQWQQQ) and 93 to 108 (AAYQQQQQQHHQSQQQ). 3 RRM domains span residues 119 to 199 (KTLW…WASF), 213 to 292 (LSIF…IATP), and 327 to 399 (STIF…WGRS).

This sequence belongs to the polyadenylate-binding RBP47 family. As to quaternary structure, interacts with the poly(A) tail of mRNA in nucleus. In terms of tissue distribution, expressed in leaves, stems, flowers, and seedlings.

The protein resides in the nucleus. It is found in the cytoplasmic granule. In terms of biological role, heterogeneous nuclear ribonucleoprotein (hnRNP)-protein binding the poly(A) tail of mRNA and probably involved in some steps of pre-mRNA maturation. The chain is Polyadenylate-binding protein RBP47A (RBP47A) from Arabidopsis thaliana (Mouse-ear cress).